The sequence spans 78 residues: Small ribosomal subunit protein uS17 (78 aa).

The protein belongs to the universal ribosomal protein uS17 family. As to quaternary structure, part of the 30S ribosomal subunit.

One of the primary rRNA binding proteins, it binds specifically to the 5'-end of 16S ribosomal RNA. The polypeptide is Small ribosomal subunit protein uS17 (Sinorhizobium fredii (strain NBRC 101917 / NGR234)).